Here is a 415-residue protein sequence, read N- to C-terminus: Tyrosine--tRNA ligase (415 aa).

Tyr34 is a binding site for L-tyrosine. Residues 39–48 (PSADSLHLGN) carry the 'HIGH' region motif. L-tyrosine contacts are provided by Tyr162 and Gln166. Positions 224-228 (KFGKS) match the 'KMSKS' region motif. ATP is bound at residue Lys227. In terms of domain architecture, S4 RNA-binding spans 346–413 (IKIIDLLNLA…KRNYFLILWN (68 aa)).

Belongs to the class-I aminoacyl-tRNA synthetase family. TyrS type 1 subfamily. In terms of assembly, homodimer.

The protein localises to the cytoplasm. It catalyses the reaction tRNA(Tyr) + L-tyrosine + ATP = L-tyrosyl-tRNA(Tyr) + AMP + diphosphate + H(+). Its function is as follows. Catalyzes the attachment of tyrosine to tRNA(Tyr) in a two-step reaction: tyrosine is first activated by ATP to form Tyr-AMP and then transferred to the acceptor end of tRNA(Tyr). The chain is Tyrosine--tRNA ligase from Ureaplasma parvum serovar 3 (strain ATCC 27815 / 27 / NCTC 11736).